The following is a 434-amino-acid chain: Methylenetetrahydrofolate--tRNA-(uracil-5-)-methyltransferase TrmFO (434 aa).

10–15 provides a ligand contact to FAD; sequence GAGLAG.

This sequence belongs to the MnmG family. TrmFO subfamily. FAD is required as a cofactor.

It is found in the cytoplasm. The enzyme catalyses uridine(54) in tRNA + (6R)-5,10-methylene-5,6,7,8-tetrahydrofolate + NADH + H(+) = 5-methyluridine(54) in tRNA + (6S)-5,6,7,8-tetrahydrofolate + NAD(+). It catalyses the reaction uridine(54) in tRNA + (6R)-5,10-methylene-5,6,7,8-tetrahydrofolate + NADPH + H(+) = 5-methyluridine(54) in tRNA + (6S)-5,6,7,8-tetrahydrofolate + NADP(+). Functionally, catalyzes the folate-dependent formation of 5-methyl-uridine at position 54 (M-5-U54) in all tRNAs. The chain is Methylenetetrahydrofolate--tRNA-(uracil-5-)-methyltransferase TrmFO from Bacillus cereus (strain AH820).